A 231-amino-acid chain; its full sequence is Probable glutathione S-transferase (231 aa).

The 93-residue stretch at 4–96 (PNFELYGYFR…YLEEALPTNA (93 aa)) folds into the GST N-terminal domain. Glutathione-binding positions include serine 14, glutamine 43, valine 57, 80–81 (QS), glutamine 124, and 128–130 (NLK). In terms of domain architecture, GST C-terminal spans 105 to 227 (NPVARAHVRT…HWQKQEDTPE (123 aa)).

The protein belongs to the GST superfamily. Zeta family. In terms of assembly, homodimer.

It catalyses the reaction RX + glutathione = an S-substituted glutathione + a halide anion + H(+). In terms of biological role, probable glutathione S-transferase. In Coccidioides immitis (strain RS) (Valley fever fungus), this protein is Probable glutathione S-transferase.